The sequence spans 313 residues: tRNA dimethylallyltransferase (313 aa).

Residue 10-17 (GPTASGKT) participates in ATP binding. A substrate-binding site is contributed by 12-17 (TASGKT). Interaction with substrate tRNA regions lie at residues 35-38 (DSAM), 159-163 (QRIQR), and 240-245 (RCVGYR).

Belongs to the IPP transferase family. Monomer. Mg(2+) serves as cofactor.

It catalyses the reaction adenosine(37) in tRNA + dimethylallyl diphosphate = N(6)-dimethylallyladenosine(37) in tRNA + diphosphate. In terms of biological role, catalyzes the transfer of a dimethylallyl group onto the adenine at position 37 in tRNAs that read codons beginning with uridine, leading to the formation of N6-(dimethylallyl)adenosine (i(6)A). The chain is tRNA dimethylallyltransferase from Legionella pneumophila subsp. pneumophila (strain Philadelphia 1 / ATCC 33152 / DSM 7513).